A 2443-amino-acid polypeptide reads, in one-letter code: Spatacsin (2443 aa).

Ser1955 carries the post-translational modification Phosphoserine.

In terms of assembly, interacts with AP5Z1, AP5B1, AP5S1 and ZFYVE26. As to expression, expressed in all structures of brain, with a high expression in cerebellum. Expressed in cortical projection neurons.

The protein localises to the cytoplasm. The protein resides in the cytosol. It localises to the nucleus. It is found in the cell projection. Its subcellular location is the axon. The protein localises to the dendrite. In terms of biological role, may play a role in neurite plasticity by maintaining cytoskeleton stability and regulating synaptic vesicle transport. The sequence is that of Spatacsin (SPG11) from Homo sapiens (Human).